Consider the following 874-residue polypeptide: Leucine--tRNA ligase (874 aa).

The short motif at 47 to 57 (PYPSGKLHMGH) is the 'HIGH' region element. The short motif at 636–640 (KMSKS) is the 'KMSKS' region element. Residue Lys639 participates in ATP binding.

Belongs to the class-I aminoacyl-tRNA synthetase family.

The protein resides in the cytoplasm. The enzyme catalyses tRNA(Leu) + L-leucine + ATP = L-leucyl-tRNA(Leu) + AMP + diphosphate. This chain is Leucine--tRNA ligase, found in Acinetobacter baumannii (strain AB0057).